The chain runs to 71 residues: Disintegrin ussuristatin-2 (71 aa).

The Disintegrin domain occupies 1 to 71 (EAGEECDCGA…QSADCPRNGF (71 aa)). Disulfide bonds link Cys-6–Cys-21, Cys-8–Cys-16, Cys-15–Cys-38, Cys-29–Cys-35, Cys-34–Cys-59, and Cys-47–Cys-66. The short motif at 51–53 (KGD) is the Cell attachment site; atypical (KGD) element.

Belongs to the venom metalloproteinase (M12B) family. P-II subfamily. P-IId sub-subfamily. Homodimer. In terms of tissue distribution, expressed by the venom gland.

The protein resides in the secreted. Functionally, suppress platelet aggregation induced by ADP, collagen, thrombin, and epinephrine (IC(50)=170-330 nM). Also dose-dependently inhibits the adhesion of human melanoma cells to fibrinogen but not to fibronectin. This is Disintegrin ussuristatin-2 from Gloydius ussuriensis (Ussuri mamushi).